A 331-amino-acid chain; its full sequence is MAQLFYDSDADLSLLSGKTVAIIGYGSQGHAHALNLKDSGVNVVVGLYAGSRSAEKAKADGLEVLSVADASAKADWIMVLLPDEFQKEVYEKEIAPHLSAGKVLSFAHGFNIRFELIKPPADVDVLMIAPKGPGHTVRWEYQNGQGVPALFAIEQDASGNARGLAMAYAKGIGGTRAGILETNFKEETETDLFGEQAVLCGGLSELVKAGFETLVEAGYQPELAYFECLHEVKLIVDLMVKGGLSSMRDSISNTAEYGDYVSGPRLITADTKAEMKRILSDIQDGTFAKNFVAECAAGKPEMNKVRARDAEHPIEKVGKGLRSMFSWLKAA.

The KARI N-terminal Rossmann domain occupies 2–182 (AQLFYDSDAD…GGTRAGILET (181 aa)). Residues 25–28 (YGSQ), Ser51, Ser53, and 83–86 (DEFQ) contribute to the NADP(+) site. His108 is a catalytic residue. NADP(+) is bound at residue Gly134. In terms of domain architecture, KARI C-terminal knotted spans 183–328 (NFKEETETDL…KGLRSMFSWL (146 aa)). Mg(2+)-binding residues include Asp191, Glu195, Glu227, and Glu231. Ser252 provides a ligand contact to substrate.

This sequence belongs to the ketol-acid reductoisomerase family. Requires Mg(2+) as cofactor.

It catalyses the reaction (2R)-2,3-dihydroxy-3-methylbutanoate + NADP(+) = (2S)-2-acetolactate + NADPH + H(+). The enzyme catalyses (2R,3R)-2,3-dihydroxy-3-methylpentanoate + NADP(+) = (S)-2-ethyl-2-hydroxy-3-oxobutanoate + NADPH + H(+). The protein operates within amino-acid biosynthesis; L-isoleucine biosynthesis; L-isoleucine from 2-oxobutanoate: step 2/4. Its pathway is amino-acid biosynthesis; L-valine biosynthesis; L-valine from pyruvate: step 2/4. Involved in the biosynthesis of branched-chain amino acids (BCAA). Catalyzes an alkyl-migration followed by a ketol-acid reduction of (S)-2-acetolactate (S2AL) to yield (R)-2,3-dihydroxy-isovalerate. In the isomerase reaction, S2AL is rearranged via a Mg-dependent methyl migration to produce 3-hydroxy-3-methyl-2-ketobutyrate (HMKB). In the reductase reaction, this 2-ketoacid undergoes a metal-dependent reduction by NADPH to yield (R)-2,3-dihydroxy-isovalerate. In Synechococcus sp. (strain CC9311), this protein is Ketol-acid reductoisomerase (NADP(+)).